Consider the following 493-residue polypeptide: Telomere-binding protein subunit alpha (493 aa).

A disordered region spans residues 1–30 (MSSAKRSTSRVSKKKAAPAKDGAPKKREQS). Residues 7–17 (STSRVSKKKAA) show a composition bias toward basic residues.

It belongs to the telombin family. Heterodimer of an alpha and a beta subunit.

The protein localises to the nucleus. It localises to the chromosome. Its subcellular location is the telomere. Its function is as follows. May function as protective capping of the single-stranded telomeric overhang. May also participate in telomere length regulation during DNA replication. The chain is Telomere-binding protein subunit alpha (STY56V) from Stylonychia mytilus (Ciliate).